A 130-amino-acid chain; its full sequence is uncharacterized protein (130 aa).

The signal sequence occupies residues 1 to 26 (MINNFKGILIIILSFLFLLLFKYSNA). The N-linked (GlcNAc...) asparagine glycan is linked to Asn-58.

It belongs to the Dictyostelium gerABC family.

The protein localises to the secreted. This is an uncharacterized protein from Dictyostelium discoideum (Social amoeba).